Consider the following 530-residue polypeptide: Light-independent protochlorophyllide reductase subunit B (530 aa).

Residue aspartate 36 coordinates [4Fe-4S] cluster. The Proton donor role is filled by aspartate 290. Position 425–426 (glycine 425–leucine 426) interacts with substrate.

The protein belongs to the ChlB/BchB/BchZ family. Protochlorophyllide reductase is composed of three subunits; ChlL, ChlN and ChlB. Forms a heterotetramer of two ChlB and two ChlN subunits. [4Fe-4S] cluster is required as a cofactor.

The catalysed reaction is chlorophyllide a + oxidized 2[4Fe-4S]-[ferredoxin] + 2 ADP + 2 phosphate = protochlorophyllide a + reduced 2[4Fe-4S]-[ferredoxin] + 2 ATP + 2 H2O. It functions in the pathway porphyrin-containing compound metabolism; chlorophyll biosynthesis (light-independent). In terms of biological role, component of the dark-operative protochlorophyllide reductase (DPOR) that uses Mg-ATP and reduced ferredoxin to reduce ring D of protochlorophyllide (Pchlide) to form chlorophyllide a (Chlide). This reaction is light-independent. The NB-protein (ChlN-ChlB) is the catalytic component of the complex. This chain is Light-independent protochlorophyllide reductase subunit B, found in Synechococcus sp. (strain WH7803).